The chain runs to 138 residues: Secreted RxLR effector protein 51 (138 aa).

The signal sequence occupies residues 1-19 (MRSSTILFVLGVAMVAVNG). A RxLR-dEER motif is present at residues 38-53 (RLLRSNSGKHKTDEER). A glycan (N-linked (GlcNAc...) asparagine) is linked at asparagine 101.

It belongs to the RxLR effector family.

The protein resides in the secreted. The protein localises to the host nucleus. Secreted effector that completely suppresses the host cell death induced by cell death-inducing proteins. In Plasmopara viticola (Downy mildew of grapevine), this protein is Secreted RxLR effector protein 51.